The sequence spans 518 residues: MKKLKINYLFIGILALLLAVALWPSIPWFGKADNRIAAIQARGELRVSTIHTPLTYNEINGKPFGLDYELAKQFADYLGVKLKVTVRQNISQLFDDLDNGNADLLAAGLVYNSERVKNYQPGPTYYSVSQQLVYKVGQYRPRTLGNLTAEQLTVAPGHVVVNDLQTLKDTKFPELSWKVDDKKGSVELMEDVIEGKLDYTIADSVAISLFQRVHPELAVALDITDEQPVTWFSPLDGDNTLSAALLDFFNEMNEDGTLARIEEKYLGHGDDFDYVDTRTFLRAVDAVLPQLKPLFEKYAEEIDWRLLAAIAYQESHWDAQATSPTGVRGMMMLTKNTAQSLGITDRTDAEQSISGGVRYLQDMMSKVPESVPENERIWFALAAYNMGYAHMLDARALTTKTKGNPDSWADVKQRLPLLSQKPYYSKLTYGYARGHEAYAYVENIRKYQISLVGYLQEKEKQATEAAMQLAQDYPAVSPTELGKEKFPFLSFLSQSSSNYLTHSPSLLFSRKGSEEKQN.

The first 21 residues, 1-21, serve as a signal peptide directing secretion; the sequence is MKKLKINYLFIGILALLLAVA. The tract at residues 22–269 is non-LT domain; it reads LWPSIPWFGK…RIEEKYLGHG (248 aa). Positions 270–518 are LT domain; it reads DDFDYVDTRT…SRKGSEEKQN (249 aa). The active site involves Glu-314.

The protein in the N-terminal section; belongs to the bacterial solute-binding protein 3 family. It in the C-terminal section; belongs to the transglycosylase Slt family.

It localises to the cell outer membrane. The enzyme catalyses Exolytic cleavage of the (1-&gt;4)-beta-glycosidic linkage between N-acetylmuramic acid (MurNAc) and N-acetylglucosamine (GlcNAc) residues in peptidoglycan, from either the reducing or the non-reducing ends of the peptidoglycan chains, with concomitant formation of a 1,6-anhydrobond in the MurNAc residue.. Functionally, murein-degrading enzyme that degrades murein glycan strands and insoluble, high-molecular weight murein sacculi, with the concomitant formation of a 1,6-anhydromuramoyl product. Lytic transglycosylases (LTs) play an integral role in the metabolism of the peptidoglycan (PG) sacculus. Their lytic action creates space within the PG sacculus to allow for its expansion as well as for the insertion of various structures such as secretion systems and flagella. In Escherichia coli O6:H1 (strain CFT073 / ATCC 700928 / UPEC), this protein is Membrane-bound lytic murein transglycosylase F.